The following is a 104-amino-acid chain: Type VII secretion system extracellular protein B (104 aa).

The protein belongs to the WXG100 family. In terms of assembly, homodimer. When mixed with EsxA does not form heterodimers.

The protein resides in the secreted. Virulence factor that is important for the establishment of infection in the host. EsxB is required for EsxA synthesis as well as secretion. Mediates together with EsxA the release of S.aureus from the host cell. Also inhibits host cytokine production and thus modulates dendritic cell-mediated immunity. This is Type VII secretion system extracellular protein B from Staphylococcus aureus (strain MSSA476).